A 328-amino-acid polypeptide reads, in one-letter code: DNA-directed RNA polymerase subunit alpha (328 aa).

The tract at residues 1 to 232 is alpha N-terminal domain (alpha-NTD); the sequence is MSTQGFLKPR…DQISVFAALE (232 aa). The tract at residues 248–328 is alpha C-terminal domain (alpha-CTD); that stretch reads IDPVLLRPVD…NWPPLGLERP (81 aa).

The protein belongs to the RNA polymerase alpha chain family. As to quaternary structure, homodimer. The RNAP catalytic core consists of 2 alpha, 1 beta, 1 beta' and 1 omega subunit. When a sigma factor is associated with the core the holoenzyme is formed, which can initiate transcription.

The catalysed reaction is RNA(n) + a ribonucleoside 5'-triphosphate = RNA(n+1) + diphosphate. DNA-dependent RNA polymerase catalyzes the transcription of DNA into RNA using the four ribonucleoside triphosphates as substrates. The polypeptide is DNA-directed RNA polymerase subunit alpha (Bordetella avium (strain 197N)).